The chain runs to 221 residues: MMKIQQLLEAGVHLGHQAKRWNPKMLPYLYTQRMGIHIIDLVQTAHLLNQACETLTVQVSEGKRVLFVGTKPQASVVVEEEATRCGEFFINQRWLGGLLTNWTTVQSRLKRWRELLEADMDHLTKKEASALRRELNQLNRQMRGIQNMDQIPDIVIVVDPNKENTAVLECHKLGILTIGIVDTNADPESVDLAIPANDDAIASLQLILSCLADAILKGKSI.

Belongs to the universal ribosomal protein uS2 family.

It is found in the plastid. It localises to the chloroplast. The chain is Small ribosomal subunit protein uS2c (rps2) from Cyanidioschyzon merolae (strain NIES-3377 / 10D) (Unicellular red alga).